The chain runs to 466 residues: Cysteine--tRNA ligase (466 aa).

Residue cysteine 29 participates in Zn(2+) binding. A 'HIGH' region motif is present at residues 31-41; sequence PTVYNYIHIGN. Residues cysteine 209, histidine 234, and glutamate 238 each coordinate Zn(2+). Residues 266–270 carry the 'KMSKS' region motif; the sequence is KMSKS. Lysine 269 provides a ligand contact to ATP. Position 270 is a phosphoserine (serine 270).

Belongs to the class-I aminoacyl-tRNA synthetase family. Monomer. Zn(2+) serves as cofactor.

It localises to the cytoplasm. It catalyses the reaction tRNA(Cys) + L-cysteine + ATP = L-cysteinyl-tRNA(Cys) + AMP + diphosphate. This is Cysteine--tRNA ligase (cysS) from Halalkalibacterium halodurans (strain ATCC BAA-125 / DSM 18197 / FERM 7344 / JCM 9153 / C-125) (Bacillus halodurans).